The following is a 299-amino-acid chain: tRNA pseudouridine synthase B (299 aa).

Asp38 (nucleophile) is an active-site residue.

It belongs to the pseudouridine synthase TruB family. Type 1 subfamily.

It carries out the reaction uridine(55) in tRNA = pseudouridine(55) in tRNA. Functionally, responsible for synthesis of pseudouridine from uracil-55 in the psi GC loop of transfer RNAs. The polypeptide is tRNA pseudouridine synthase B (Alkaliphilus oremlandii (strain OhILAs) (Clostridium oremlandii (strain OhILAs))).